The following is a 465-amino-acid chain: GTPase Der (465 aa).

2 consecutive EngA-type G domains span residues 3-166 and 184-358; these read FLVA…LNEY and IHFS…ACAN. Residues 9-16, 56-60, 118-121, 190-197, 237-241, and 302-305 each bind GTP; these read GRANVGKS, DTGGI, NKVD, GRPNVGKS, DTAGV, and NKWD. Residues 359–443 form the KH-like domain; sequence KKITTADATR…PIVFEFKQSE (85 aa). Residues 446–465 form a disordered region; the sequence is FADRKNKRSKDEGSKSKKVK.

The protein belongs to the TRAFAC class TrmE-Era-EngA-EngB-Septin-like GTPase superfamily. EngA (Der) GTPase family. As to quaternary structure, associates with the 50S ribosomal subunit.

Its function is as follows. GTPase that plays an essential role in the late steps of ribosome biogenesis. The polypeptide is GTPase Der (Francisella tularensis subsp. novicida (strain U112)).